A 192-amino-acid polypeptide reads, in one-letter code: 7-methyl-GTP pyrophosphatase (192 aa).

Aspartate 69 acts as the Proton acceptor in catalysis.

It belongs to the Maf family. YceF subfamily. A divalent metal cation serves as cofactor.

The protein localises to the cytoplasm. The catalysed reaction is N(7)-methyl-GTP + H2O = N(7)-methyl-GMP + diphosphate + H(+). Its function is as follows. Nucleoside triphosphate pyrophosphatase that hydrolyzes 7-methyl-GTP (m(7)GTP). May have a dual role in cell division arrest and in preventing the incorporation of modified nucleotides into cellular nucleic acids. This Pseudomonas fluorescens (strain Pf0-1) protein is 7-methyl-GTP pyrophosphatase.